Reading from the N-terminus, the 107-residue chain is Serine-rich and transmembrane domain-containing protein 1 (107 aa).

Residues 43–63 form a helical membrane-spanning segment; that stretch reads IYVSIFLSLLAFLLLLLIIAL.

It is found in the membrane. The sequence is that of Serine-rich and transmembrane domain-containing protein 1 (Sertm1) from Mus musculus (Mouse).